The primary structure comprises 178 residues: MSRIGKRIIEIPSSVQASVEGSKLLFKNNKEKHELETHNRVKITLENNQLSFQPIGEDVQSRAYWGTYGALANNIVIGLSTGFSKTLEVNGVGYKVALGNKTLDLSLGFSHPVKYPIPAGIEMVVEKNTITIKGSDKQKVGQVAAEIRSFRPPEPYKGKGVKYSDEVIIRKAGKTAKK.

The protein belongs to the universal ribosomal protein uL6 family. In terms of assembly, part of the 50S ribosomal subunit.

Its function is as follows. This protein binds to the 23S rRNA, and is important in its secondary structure. It is located near the subunit interface in the base of the L7/L12 stalk, and near the tRNA binding site of the peptidyltransferase center. This chain is Large ribosomal subunit protein uL6, found in Helicobacter acinonychis (strain Sheeba).